The primary structure comprises 1692 residues: Fatty acid synthase alpha subunit hexA (1692 aa).

The interval Ala44–Pro80 is disordered. In terms of domain architecture, Carrier spans Leu90–Leu174. Position 125 is an O-(pantetheine 4'-phosphoryl)serine (Ser125). The ketoreductase (KR) domain stretch occupies residues Phe508–Val746. In terms of domain architecture, Ketosynthase family 3 (KS3) spans Lys948–Ala1430. Catalysis depends on Cys1135, which acts as the For beta-ketoacyl synthase activity. A disordered region spans residues Gly1263–Arg1287. The segment covering Ser1270–Ser1284 has biased composition (low complexity). Residues His1315 and His1356 each act as for beta-ketoacyl synthase activity in the active site. Asp1569 contacts Mg(2+). Residues Asp1569–Val1571, Glu1615–Thr1625, Lys1639–Asn1642, and Ile1668–His1670 each bind acetyl-CoA. Residue Ser1669 coordinates Mg(2+).

Belongs to the thiolase-like superfamily. Fungal fatty acid synthetase subunit alpha family. [Alpha(6)beta(6)] hexamers of two multifunctional subunits (alpha and beta). 4'-phosphopantetheine is transferred from CoA to a specific serine of the acyl carrier domain by the C-terminal PPT domain. This modification is essential for activity because fatty acids are bound in thioester linkage to the sulfhydryl of the prosthetic group.

It carries out the reaction acetyl-CoA + n malonyl-CoA + 2n NADPH + 4n H(+) = a long-chain-acyl-CoA + n CoA + n CO2 + 2n NADP(+).. The enzyme catalyses a fatty acyl-[ACP] + malonyl-[ACP] + H(+) = a 3-oxoacyl-[ACP] + holo-[ACP] + CO2. The catalysed reaction is a (3R)-hydroxyacyl-[ACP] + NADP(+) = a 3-oxoacyl-[ACP] + NADPH + H(+). It participates in mycotoxin biosynthesis. In terms of biological role, fatty acid synthase alpha subunit; part of the fragmented gene cluster that mediates the biosynthesis of dothistromin (DOTH), a polyketide toxin very similar in structure to the aflatoxin precursor, versicolorin B. The first step of the pathway is the conversion of acetate to norsolorinic acid (NOR) and requires the fatty acid synthase subunits hexA and hexB, as well as the polyketide synthase pksA. PksA combines a hexanoyl starter unit and 7 malonyl-CoA extender units to synthesize the precursor NOR. The hexanoyl starter unit is provided to the acyl-carrier protein (ACP) domain by the fungal fatty acid synthase hexA/hexB. The second step is the conversion of NOR to averantin (AVN) and requires the norsolorinic acid ketoreductase nor1, which catalyzes the dehydration of norsolorinic acid to form (1'S)-averantin. The cytochrome P450 monooxygenase avnA then catalyzes the hydroxylation of AVN to 5'hydroxyaverantin (HAVN). The next step is performed by adhA that transforms HAVN to averufin (AVF). Averufin might then be converted to hydroxyversicolorone by cypX and avfA. Hydroxyversicolorone is further converted versiconal hemiacetal acetate (VHA) by moxY. VHA is then the substrate for the versiconal hemiacetal acetate esterase est1 to yield versiconal (VAL). Versicolorin B synthase vbsA then converts VAL to versicolorin B (VERB) by closing the bisfuran ring. Then, the activity of the versicolorin B desaturase verB leads to versicolorin A (VERA). DotB, a predicted chloroperoxidase, may perform epoxidation of the A-ring of VERA. Alternatively, a cytochrome P450, such as cypX or avnA could catalyze this step. It is also possible that another, uncharacterized, cytochrome P450 enzyme is responsible for this step. Opening of the epoxide could potentially be achieved by the epoxide hydrolase epoA. However, epoA seems not to be required for DOTH biosynthesis, but other epoxide hydrolases may have the ability to complement this hydrolysis. Alternatively, opening of the epoxide ring could be achieved non-enzymatically. The next step is the deoxygenation of ring A to yield the 5,8-dihydroxyanthraquinone which is most likely catalyzed by the NADPH dehydrogenase encoded by ver1. The last stages of DOTH biosynthesis are proposed to involve hydroxylation of the bisfuran. OrdB and norB might have oxidative roles here. An alternative possibility is that cytochrome P450 monoogenases such as avnA and cypX might perform these steps in addition to previously proposed steps. This Dothistroma septosporum (strain NZE10 / CBS 128990) (Red band needle blight fungus) protein is Fatty acid synthase alpha subunit hexA.